The sequence spans 220 residues: MNISPYRTRIKFCGMTRVGDVRLASELGVDAVGLIFASGSSRLLTVSAACAIRRTVAPMVNVVALFQNNSADEIHTVVRTVRPTLLQFHGEEEDAFCRTFNVPYLKAIPMAGAEAKRICTRTLYLKYPNAAGFIFDSHLKGGTGQTFDWSRLPIDLQHPFLLAGGITPENVFDAIAATVPWGVDVSSGIELQPGIKDGDKMRQFVEEVRRADGRRLFGVA.

Belongs to the TrpF family.

The enzyme catalyses N-(5-phospho-beta-D-ribosyl)anthranilate = 1-(2-carboxyphenylamino)-1-deoxy-D-ribulose 5-phosphate. The protein operates within amino-acid biosynthesis; L-tryptophan biosynthesis; L-tryptophan from chorismate: step 3/5. The protein is N-(5'-phosphoribosyl)anthranilate isomerase of Xylella fastidiosa (strain 9a5c).